A 255-amino-acid chain; its full sequence is 5'-nucleotidase SurE (255 aa).

Residues Asp-7, Asp-8, Ser-38, and Asn-90 each contribute to the a divalent metal cation site.

This sequence belongs to the SurE nucleotidase family. The cofactor is a divalent metal cation.

It localises to the cytoplasm. It catalyses the reaction a ribonucleoside 5'-phosphate + H2O = a ribonucleoside + phosphate. In terms of biological role, nucleotidase that shows phosphatase activity on nucleoside 5'-monophosphates. In Picrophilus torridus (strain ATCC 700027 / DSM 9790 / JCM 10055 / NBRC 100828 / KAW 2/3), this protein is 5'-nucleotidase SurE.